Here is a 361-residue protein sequence, read N- to C-terminus: Protein RecA (361 aa).

77–84 contacts ATP; it reads GPESSGKT.

It belongs to the RecA family.

The protein localises to the cytoplasm. Can catalyze the hydrolysis of ATP in the presence of single-stranded DNA, the ATP-dependent uptake of single-stranded DNA by duplex DNA, and the ATP-dependent hybridization of homologous single-stranded DNAs. It interacts with LexA causing its activation and leading to its autocatalytic cleavage. This chain is Protein RecA, found in Brucella anthropi (strain ATCC 49188 / DSM 6882 / CCUG 24695 / JCM 21032 / LMG 3331 / NBRC 15819 / NCTC 12168 / Alc 37) (Ochrobactrum anthropi).